Reading from the N-terminus, the 128-residue chain is Lutropin subunit beta (128 aa).

6 disulfide bridges follow: Cys-18–Cys-66, Cys-32–Cys-81, Cys-35–Cys-119, Cys-43–Cys-97, Cys-47–Cys-99, and Cys-102–Cys-109. Asn-22 carries an N-linked (GlcNAc...) asparagine glycan.

The protein belongs to the glycoprotein hormones subunit beta family. Heterodimer of a common alpha chain and a unique beta chain which confers biological specificity to thyrotropin, lutropin, follitropin and gonadotropin.

It localises to the secreted. Its function is as follows. Promotes spermatogenesis and ovulation by stimulating the testes and ovaries to synthesize steroids. This Struthio camelus (Common ostrich) protein is Lutropin subunit beta (LHB).